The primary structure comprises 611 residues: Mitochondrial import receptor subunit TOM70 (611 aa).

An N-acetylalanine modification is found at Ala2. Topologically, residues 2-41 are mitochondrial intermembrane; that stretch reads AASKPIEAAMAAAAAPGSGNGVGGGGGTAGPGSGAGTLPR. A helical membrane pass occupies residues 42 to 62; it reads WHVALAIGAPLLLGAGAMYLW. Topologically, residues 63 to 611 are cytoplasmic; sequence SRRRRRREAG…KKYGLKPPTL (549 aa). Positions 69–110 are disordered; that stretch reads REAGGRGDASGLKRNSERKTPEGRASPALGSGHHDGSGDSLE. Arg74 is subject to Omega-N-methylarginine. Ser94, Ser99, Ser105, Ser108, and Ser113 each carry phosphoserine. TPR repeat units lie at residues 117–150 and 156–189; these read AQAAKNKGNKYFKAGKYEQAIQCYTEAISLCPTE and STFYQNRAAAFEQLQKWKEVAQDCTKAVELNPKY. Lys188 is subject to N6-acetyllysine. Residue Lys278 forms a Glycyl lysine isopeptide (Lys-Gly) (interchain with G-Cter in SUMO2) linkage. TPR repeat units follow at residues 297–330, 332–365, 370–403, 404–437, 445–478, 479–512, 514–547, and 548–581; these read ENSGYLKAKQYMEEENYDKIISECSKEIDAQGKY, AEALLLRATFYLLIGSANAAKPDLDKVISLKEAN, ANALIKRGTMCMQQQQPMLSTQDFNMAAEIDPMN, SDVYHHRGQLKILLDLVEEAVADFDACIRLRPKF, CFALYRQAYTANNSSQVQAAMKGFEEIIKKFPRC, AEGYALYAQALTDQQQFGKADEMYDKCIDLEPDN, TTYVHKGLLQLQWKQDLDKGLELISKAIEIDNKC, and DFAYETMGTIEVQRGNMEKAIDMFNKAINLAKSE.

It belongs to the Tom70 family. As to quaternary structure, forms part of the preprotein translocase complex of the outer mitochondrial membrane (TOM complex) which consists of at least 7 different proteins (TOMM5, TOMM6, TOMM7, TOMM20, TOMM22, TOMM40 and TOMM70). Interacts with CAPN8. Interacts with TRADD, TRAF6 and STING. Interacts with MAVS. Interacts with HSPA8 and HSP90AA1; both interactions are required for preprotein mitochondrial import. The interaction with HSP90AA1 is direct and mediates the association of TOMM70 with IRF3 and TBK1. Upon mitochondrial depolarization, interacts with PINK1; the interaction is required for PINK1-TOM-TIM23 supercomplex formation which is critical for PINK1 stabilization at the outer mitochondrial membrane, kinase activation and downstream mitophagy. In terms of tissue distribution, expressed in the base region of the oxyntic and pyloric mucosae.

It is found in the mitochondrion outer membrane. Functionally, acts as a receptor of the preprotein translocase complex of the outer mitochondrial membrane (TOM complex). Recognizes and mediates the translocation of mitochondrial preproteins from the cytosol into the mitochondria in a chaperone dependent manner. Mediates TBK1 and IRF3 activation induced by MAVS in response to virus infection and promotes host antiviral responses during virus infection. In Mus musculus (Mouse), this protein is Mitochondrial import receptor subunit TOM70.